An 875-amino-acid polypeptide reads, in one-letter code: MKDYNDNIHRPNPHNLYNNISLLCPPKMKGNSENLSTNNNPNLTGKNIKVSNRHDKMKDIHIHKLPDVENISSDMNPKSSKMFSFKNINHNKEENEIHLKDKYSFEKREDDMYNMSVSNMHKVPIHKQNIYSKNNYNTSVCLQQNKKETNNISYINNIHNTMCITNNKNDHSVEHKINIYNNKYNYNNTFLCNKKLCTQKIIQYIGKNQNTKHPLHSLYHTNVVGMNKFNSSNNLSDQINILNNNIQHINSTFNNLRQNNIYKNNDSIELFINNNLKSGDTNKYATFYKNVKISEKNNMYKQKEDKKQINNKNPYIFTCQKYFMRPSNVLHNIQNCGIHKKKKKKKKNHQIKHRSFHNIYKQINIINDQIDLINNKINKNSKDQNRAHILEISPLSLPSYIEYKNKNNNIFSSYFAHPNNKTHNFKKIKMIKKNISNPFNKEEPCGEKKNSPQVNDSKSFRYFDHSTCNNNYHNKEYMKKEQKSHLHSNHNINHEKGSDPSYNLNTKNTKNVTNTNDQTCIYEDHTFEKAVENNKVMYLKNKPIQSKLLKLNNQILNNTDQKKYEKCIDHGDTCNNKDEKNIKCTYKIDDILCSYNNGNNIKYEREVIKITNKYRNALEKWRYKFVHKNKTTKRNITSSNQKGKCNFNIFKINKHINKKKNKKIKKIESNKYGNMYNFVDKKVNNNQGNKKKNEKKNEKKNDKINDTINDKINHKINHKKNDKINHKKNDKINHKKNDKINHKKNDKINNKINHKKNMIPNQKPINNMIKYNIKNKKKIYNDTNDHADNRNIHSHIHKKVPNKKDNNINHMYYDNNNNINQPISYIHTAYDNVCHQINNDDHCIPLSCVIKNRKTRRSRKNKNLFNNKKNYTNEP.

3 disordered regions span residues 29–48 (KGNS…GKNI), 481–510 (EQKS…KNTK), and 680–705 (DKKV…DKIN). Residues 31-44 (NSENLSTNNNPNLT) show a composition bias toward low complexity. Residues 695 to 705 (KKNEKKNDKIN) show a composition bias toward basic and acidic residues.

This is an uncharacterized protein from Plasmodium falciparum (isolate 3D7).